A 1372-amino-acid polypeptide reads, in one-letter code: DNA-directed RNA polymerase subunit beta (1372 aa).

It belongs to the RNA polymerase beta chain family. The RNAP catalytic core consists of 2 alpha, 1 beta, 1 beta' and 1 omega subunit. When a sigma factor is associated with the core the holoenzyme is formed, which can initiate transcription.

The enzyme catalyses RNA(n) + a ribonucleoside 5'-triphosphate = RNA(n+1) + diphosphate. Functionally, DNA-dependent RNA polymerase catalyzes the transcription of DNA into RNA using the four ribonucleoside triphosphates as substrates. In Psychrobacter cryohalolentis (strain ATCC BAA-1226 / DSM 17306 / VKM B-2378 / K5), this protein is DNA-directed RNA polymerase subunit beta.